The following is a 316-amino-acid chain: Pantothenate kinase (316 aa).

Residue 95–102 (GSVAVGKS) coordinates ATP.

The protein belongs to the prokaryotic pantothenate kinase family.

The protein localises to the cytoplasm. It carries out the reaction (R)-pantothenate + ATP = (R)-4'-phosphopantothenate + ADP + H(+). Its pathway is cofactor biosynthesis; coenzyme A biosynthesis; CoA from (R)-pantothenate: step 1/5. This is Pantothenate kinase from Klebsiella pneumoniae (strain 342).